The chain runs to 350 residues: DNA polymerase IV (350 aa).

The UmuC domain occupies 5–181 (IMHYDMDAFY…KKIKIIPGVG (177 aa)). 2 residues coordinate Mg(2+): aspartate 9 and aspartate 99. Glutamate 100 is an active-site residue.

The protein belongs to the DNA polymerase type-Y family. Monomer. Requires Mg(2+) as cofactor.

Its subcellular location is the cytoplasm. The catalysed reaction is DNA(n) + a 2'-deoxyribonucleoside 5'-triphosphate = DNA(n+1) + diphosphate. Poorly processive, error-prone DNA polymerase involved in untargeted mutagenesis. Copies undamaged DNA at stalled replication forks, which arise in vivo from mismatched or misaligned primer ends. These misaligned primers can be extended by PolIV. Exhibits no 3'-5' exonuclease (proofreading) activity. May be involved in translesional synthesis, in conjunction with the beta clamp from PolIII. This is DNA polymerase IV from Fusobacterium nucleatum subsp. nucleatum (strain ATCC 25586 / DSM 15643 / BCRC 10681 / CIP 101130 / JCM 8532 / KCTC 2640 / LMG 13131 / VPI 4355).